Here is a 92-residue protein sequence, read N- to C-terminus: Signal recognition particle 19 kDa protein (92 aa).

Belongs to the SRP19 family. As to quaternary structure, part of the signal recognition particle protein translocation system, which is composed of SRP and FtsY. Archaeal SRP consists of a 7S RNA molecule of 300 nucleotides and two protein subunits: SRP54 and SRP19.

It localises to the cytoplasm. Its function is as follows. Involved in targeting and insertion of nascent membrane proteins into the cytoplasmic membrane. Binds directly to 7S RNA and mediates binding of the 54 kDa subunit of the SRP. In Haloferax volcanii (strain ATCC 29605 / DSM 3757 / JCM 8879 / NBRC 14742 / NCIMB 2012 / VKM B-1768 / DS2) (Halobacterium volcanii), this protein is Signal recognition particle 19 kDa protein.